The following is a 571-amino-acid chain: Proline--tRNA ligase (571 aa).

The protein belongs to the class-II aminoacyl-tRNA synthetase family. ProS type 1 subfamily. In terms of assembly, homodimer.

It is found in the cytoplasm. The enzyme catalyses tRNA(Pro) + L-proline + ATP = L-prolyl-tRNA(Pro) + AMP + diphosphate. Its function is as follows. Catalyzes the attachment of proline to tRNA(Pro) in a two-step reaction: proline is first activated by ATP to form Pro-AMP and then transferred to the acceptor end of tRNA(Pro). As ProRS can inadvertently accommodate and process non-cognate amino acids such as alanine and cysteine, to avoid such errors it has two additional distinct editing activities against alanine. One activity is designated as 'pretransfer' editing and involves the tRNA(Pro)-independent hydrolysis of activated Ala-AMP. The other activity is designated 'posttransfer' editing and involves deacylation of mischarged Ala-tRNA(Pro). The misacylated Cys-tRNA(Pro) is not edited by ProRS. The sequence is that of Proline--tRNA ligase from Pseudomonas aeruginosa (strain LESB58).